Consider the following 308-residue polypeptide: Glutathione synthetase (308 aa).

One can recognise an ATP-grasp domain in the interval 120–304 (KLGALRFNNL…LADQVIARLL (185 aa)). 146–202 (AREQEEVVLKPLGGRAGQGLVRVAGAAPGLEALLELVTDQEQLPVMVQRFLPAVIEG) is a binding site for ATP. Mg(2+) is bound by residues Glu275 and Asn277.

The protein belongs to the prokaryotic GSH synthase family. Mg(2+) serves as cofactor. Mn(2+) is required as a cofactor.

It carries out the reaction gamma-L-glutamyl-L-cysteine + glycine + ATP = glutathione + ADP + phosphate + H(+). The protein operates within sulfur metabolism; glutathione biosynthesis; glutathione from L-cysteine and L-glutamate: step 2/2. The sequence is that of Glutathione synthetase from Prochlorococcus marinus (strain MIT 9313).